The following is a 340-amino-acid chain: Sodium/bile acid cotransporter 7 (340 aa).

Residues methionine 1–glutamate 10 are Cytoplasmic-facing. Residues tryptophan 11–valine 31 traverse the membrane as a helical segment. Residues asparagine 32–lysine 37 lie on the Extracellular side of the membrane. Residues proline 38 to leucine 58 form a helical membrane-spanning segment. The Cytoplasmic portion of the chain corresponds to lysine 59–arginine 71. A helical transmembrane segment spans residues leucine 72–leucine 92. The Extracellular portion of the chain corresponds to glutamine 93 to proline 116. The helical transmembrane segment at proline 117–phenylalanine 137 threads the bilayer. Asparagine 138 is a topological domain (cytoplasmic). A helical membrane pass occupies residues serine 139–glycine 159. Topologically, residues serine 160 to serine 163 are extracellular. Residues valine 164–glycine 184 traverse the membrane as a helical segment. Over glutamine 185 to proline 201 the chain is Cytoplasmic. The chain crosses the membrane as a helical span at residues phenylalanine 202 to phenylalanine 222. Over serine 223–leucine 234 the chain is Extracellular. Residues isoleucine 235–phenylalanine 255 form a helical membrane-spanning segment. At serine 256–alanine 270 the chain is on the cytoplasmic side. A helical transmembrane segment spans residues isoleucine 271–phenylalanine 291. Residues alanine 292 to serine 298 lie on the Extracellular side of the membrane. A helical transmembrane segment spans residues leucine 299–valine 319. Residues proline 320 to valine 340 lie on the Cytoplasmic side of the membrane.

The protein belongs to the bile acid:sodium symporter (BASS) (TC 2.A.28) family. Expressed in heart, brain, colon, lung, liver, adrenal gland, stomach and ovary. Also expressed weakly in small intestine. Expressed in skeletal tissues.

The protein resides in the cell membrane. Its subcellular location is the endoplasmic reticulum membrane. The protein localises to the golgi apparatus membrane. Functionally, involved in teeth and skeletal development. Has an essential role in the biosynthesis and trafficking of glycosaminoglycans and glycoproteins to produce a proper functioning extracellular matrix. Required for extracellular matrix mineralization. Also involved in the regulation of cellular calcium homeostasis. Does not show transport activity towards bile acids or steroid sulfates (including taurocholate, cholate, chenodeoxycholate, estrone-3-sulfate, dehydroepiandrosterone sulfate (DHEAS) and pregnenolone sulfate). The chain is Sodium/bile acid cotransporter 7 (Slc10a7) from Mus musculus (Mouse).